Reading from the N-terminus, the 282-residue chain is Nudix hydrolase 7 (282 aa).

The Nudix hydrolase domain maps to 101–233 (SHVVGAGALV…KNEMFKFMAN (133 aa)). The Nudix box signature appears at 139-160 (GVINEGEDIWTGVAREVEEETG). Residues Glu154 and Glu158 each coordinate Mg(2+).

The protein belongs to the Nudix hydrolase family. As to quaternary structure, homodimer. Interacts with RACK1A, GG1 and GG2. Mg(2+) is required as a cofactor. Expressed in stems, leaves, roots, flowers and siliques.

It is found in the nucleus. It localises to the cytoplasm. The protein resides in the cell membrane. It catalyses the reaction ADP-D-ribose + H2O = D-ribose 5-phosphate + AMP + 2 H(+). The enzyme catalyses NAD(+) + H2O = beta-nicotinamide D-ribonucleotide + AMP + 2 H(+). It carries out the reaction NADH + H2O = reduced beta-nicotinamide D-ribonucleotide + AMP + 2 H(+). Its activity is regulated as follows. Not inhibited by fluoride. Functionally, mediates the hydrolysis of some nucleoside diphosphate derivatives. Can use both NADH and ADP-ribose as substrates, but not 8-oxo-dGTP, cyclic ADP-ribose, GDP-mannose, UDP-glucose, ATP, or GTP. Exerts negative control of EDS1 signaling. The sequence is that of Nudix hydrolase 7 (NUDT7) from Arabidopsis thaliana (Mouse-ear cress).